A 177-amino-acid polypeptide reads, in one-letter code: ATP synthase subunit delta (177 aa).

Belongs to the ATPase delta chain family. As to quaternary structure, F-type ATPases have 2 components, F(1) - the catalytic core - and F(0) - the membrane proton channel. F(1) has five subunits: alpha(3), beta(3), gamma(1), delta(1), epsilon(1). F(0) has three main subunits: a(1), b(2) and c(10-14). The alpha and beta chains form an alternating ring which encloses part of the gamma chain. F(1) is attached to F(0) by a central stalk formed by the gamma and epsilon chains, while a peripheral stalk is formed by the delta and b chains.

It localises to the cell inner membrane. F(1)F(0) ATP synthase produces ATP from ADP in the presence of a proton or sodium gradient. F-type ATPases consist of two structural domains, F(1) containing the extramembraneous catalytic core and F(0) containing the membrane proton channel, linked together by a central stalk and a peripheral stalk. During catalysis, ATP synthesis in the catalytic domain of F(1) is coupled via a rotary mechanism of the central stalk subunits to proton translocation. Functionally, this protein is part of the stalk that links CF(0) to CF(1). It either transmits conformational changes from CF(0) to CF(1) or is implicated in proton conduction. The sequence is that of ATP synthase subunit delta from Klebsiella pneumoniae subsp. pneumoniae (strain ATCC 700721 / MGH 78578).